Reading from the N-terminus, the 544-residue chain is Light-independent protochlorophyllide reductase subunit B (544 aa).

A [4Fe-4S] cluster-binding site is contributed by D36. The active-site Proton donor is D286. A substrate-binding site is contributed by 421 to 422; that stretch reads GM.

It belongs to the ChlB/BchB/BchZ family. In terms of assembly, protochlorophyllide reductase is composed of three subunits; BchL, BchN and BchB. Forms a heterotetramer of two BchB and two BchN subunits. [4Fe-4S] cluster serves as cofactor.

The enzyme catalyses chlorophyllide a + oxidized 2[4Fe-4S]-[ferredoxin] + 2 ADP + 2 phosphate = protochlorophyllide a + reduced 2[4Fe-4S]-[ferredoxin] + 2 ATP + 2 H2O. Its pathway is porphyrin-containing compound metabolism; bacteriochlorophyll biosynthesis (light-independent). In terms of biological role, component of the dark-operative protochlorophyllide reductase (DPOR) that uses Mg-ATP and reduced ferredoxin to reduce ring D of protochlorophyllide (Pchlide) to form chlorophyllide a (Chlide). This reaction is light-independent. The NB-protein (BchN-BchB) is the catalytic component of the complex. This is Light-independent protochlorophyllide reductase subunit B from Chloroflexus aggregans (strain MD-66 / DSM 9485).